A 245-amino-acid chain; its full sequence is MADS-box transcription factor 55 (245 aa).

The 61-residue stretch at 1-61 (MARERREIRR…GKLSQFASSN (61 aa)) folds into the MADS-box domain. The 91-residue stretch at 109–199 (LQLEHSKCSS…RDQMPQVPTA (91 aa)) folds into the K-box domain. The segment at 197–245 (PTAGLAVPDTENVLTEDGQSSESVMTALNSGSSQDNDDGSDISLKLGLP) is disordered. Residues 213-224 (DGQSSESVMTAL) are compositionally biased toward polar residues.

In terms of tissue distribution, expressed in roots, shoots and developing panicles. Expressed in shoots.

The protein localises to the nucleus. In terms of biological role, transcription factor that acts as a negative regulator of brassinosteroid signaling. This is MADS-box transcription factor 55 (MADS55) from Oryza sativa subsp. japonica (Rice).